A 477-amino-acid chain; its full sequence is Glycogen synthase (477 aa).

Lysine 15 lines the ADP-alpha-D-glucose pocket.

This sequence belongs to the glycosyltransferase 1 family. Bacterial/plant glycogen synthase subfamily.

The catalysed reaction is [(1-&gt;4)-alpha-D-glucosyl](n) + ADP-alpha-D-glucose = [(1-&gt;4)-alpha-D-glucosyl](n+1) + ADP + H(+). It functions in the pathway glycan biosynthesis; glycogen biosynthesis. In terms of biological role, synthesizes alpha-1,4-glucan chains using ADP-glucose. The chain is Glycogen synthase from Salmonella typhi.